We begin with the raw amino-acid sequence, 218 residues long: Very-long-chain (3R)-3-hydroxyacyl-CoA dehydratase (218 aa).

Residues 1-6 (MKTYLS) are Cytoplasmic-facing. Residues 7–29 (IYYLIQFCGHSWIFTNMTTRFLF) traverse the membrane as a helical segment. At 30 to 38 (FGQDAFADT) the chain is on the lumenal side. The chain crosses the membrane as a helical span at residues 39 to 61 (FYSIGLVMQGCQLLSILELAHIL). Residues 62–67 (LGVEQN) are Cytoplasmic-facing. A helical transmembrane segment spans residues 68–87 (GFLPMFLQVAERFIILFVVI). At 88–96 (TSQEEVQSK) the chain is on the lumenal side. The helical transmembrane segment at 97–116 (YIVCALFFIWNLWDVIRYPY) threads the bilayer. Over 117–136 (DMLAAVDTDYSALTWLRHTW) the chain is Cytoplasmic. A helical transmembrane segment spans residues 137–159 (WIVAYPLSVLAEAYTIYESLPYF). Residues Tyr-141 and Glu-148 contribute to the active site. Topologically, residues 160–178 (ESLGTYSFKMALPVSLSFH) are lumenal. A helical membrane pass occupies residues 179 to 201 (FPYILTLYLVLQPVGMLYICSCL). At 202–218 (WSERKQYFQRKLKLKKN) the chain is on the cytoplasmic side.

This sequence belongs to the very long-chain fatty acids dehydratase HACD family.

Its subcellular location is the endoplasmic reticulum membrane. The enzyme catalyses a very-long-chain (3R)-3-hydroxyacyl-CoA = a very-long-chain (2E)-enoyl-CoA + H2O. It catalyses the reaction (3R)-hydroxyhexadecanoyl-CoA = (2E)-hexadecenoyl-CoA + H2O. The protein operates within lipid metabolism; fatty acid biosynthesis. In terms of biological role, catalyzes the third of the four reactions of the long-chain fatty acids elongation cycle. This endoplasmic reticulum-bound enzymatic process, allows the addition of two carbons to the chain of long- and very long-chain fatty acids/VLCFAs per cycle. This enzyme catalyzes the dehydration of the 3-hydroxyacyl-CoA intermediate into trans-2,3-enoyl-CoA, within each cycle of fatty acid elongation. Thereby, it participates in the production of VLCFAs of different chain lengths that are involved in multiple biological processes as precursors of membrane lipids and lipid mediators. The chain is Very-long-chain (3R)-3-hydroxyacyl-CoA dehydratase from Xenopus laevis (African clawed frog).